A 447-amino-acid polypeptide reads, in one-letter code: N-succinylarginine dihydrolase (447 aa).

Substrate is bound by residues 19-28, N110, and 137-138; these read AGLSFGNEAS and HR. Residue E174 is part of the active site. R212 lines the substrate pocket. The active site involves H248. D250 and N359 together coordinate substrate. C365 (nucleophile) is an active-site residue.

This sequence belongs to the succinylarginine dihydrolase family. Homodimer.

It catalyses the reaction N(2)-succinyl-L-arginine + 2 H2O + 2 H(+) = N(2)-succinyl-L-ornithine + 2 NH4(+) + CO2. The protein operates within amino-acid degradation; L-arginine degradation via AST pathway; L-glutamate and succinate from L-arginine: step 2/5. Its function is as follows. Catalyzes the hydrolysis of N(2)-succinylarginine into N(2)-succinylornithine, ammonia and CO(2). This chain is N-succinylarginine dihydrolase, found in Salmonella typhimurium (strain LT2 / SGSC1412 / ATCC 700720).